The following is a 360-amino-acid chain: Photosystem II protein D1 (360 aa).

3 helical membrane passes run 29-46 (YIGWFGCLMFPTLLTATS), 118-133 (HFLLGVASYMGREWEL), and 142-156 (WIFVAFSAPVAAASA). Histidine 118 is a binding site for chlorophyll a. Tyrosine 126 is a binding site for pheophytin a. 2 residues coordinate [CaMn4O5] cluster: aspartate 170 and glutamate 189. The helical transmembrane segment at 197–218 (FHMAGVAGVFGGSLFSAMHGSL) threads the bilayer. Histidine 198 provides a ligand contact to chlorophyll a. Residues histidine 215 and 264–265 (SF) each bind a quinone. Fe cation is bound at residue histidine 215. Residue histidine 272 coordinates Fe cation. The helical transmembrane segment at 274 to 288 (FLALWPVLGIWLTAM) threads the bilayer. [CaMn4O5] cluster is bound by residues histidine 332, glutamate 333, aspartate 342, and alanine 344. Residues 345-360 (SGDVLPVAFTAPAVNA) constitute a propeptide that is removed on maturation.

It belongs to the reaction center PufL/M/PsbA/D family. PSII is composed of 1 copy each of membrane proteins PsbA, PsbB, PsbC, PsbD, PsbE, PsbF, PsbH, PsbI, PsbJ, PsbK, PsbL, PsbM, PsbT, PsbX, PsbY, PsbZ, Psb30/Ycf12, at least 3 peripheral proteins of the oxygen-evolving complex and a large number of cofactors. It forms dimeric complexes. The D1/D2 heterodimer binds P680, chlorophylls that are the primary electron donor of PSII, and subsequent electron acceptors. It shares a non-heme iron and each subunit binds pheophytin, quinone, additional chlorophylls, carotenoids and lipids. D1 provides most of the ligands for the Mn4-Ca-O5 cluster of the oxygen-evolving complex (OEC). There is also a Cl(-1) ion associated with D1 and D2, which is required for oxygen evolution. The PSII complex binds additional chlorophylls, carotenoids and specific lipids. serves as cofactor. In terms of processing, tyr-161 forms a radical intermediate that is referred to as redox-active TyrZ, YZ or Y-Z. C-terminally processed by CTPA; processing is essential to allow assembly of the oxygen-evolving complex and thus photosynthetic growth.

It localises to the plastid. It is found in the chloroplast thylakoid membrane. It catalyses the reaction 2 a plastoquinone + 4 hnu + 2 H2O = 2 a plastoquinol + O2. Photosystem II (PSII) is a light-driven water:plastoquinone oxidoreductase that uses light energy to abstract electrons from H(2)O, generating O(2) and a proton gradient subsequently used for ATP formation. It consists of a core antenna complex that captures photons, and an electron transfer chain that converts photonic excitation into a charge separation. The D1/D2 (PsbA/PsbD) reaction center heterodimer binds P680, the primary electron donor of PSII as well as several subsequent electron acceptors. This is Photosystem II protein D1 from Thalassiosira pseudonana (Marine diatom).